The following is a 363-amino-acid chain: Ribosome-binding ATPase YchF (363 aa).

One can recognise an OBG-type G domain in the interval 3–256; sequence FKCGIVGLPN…LDDDEKIEFL (254 aa). Residue 12–17 participates in ATP binding; the sequence is NVGKST. Positions 16 and 36 each coordinate Mg(2+). The region spanning 278–361 is the TGS domain; that stretch reads NLQTYFTAGV…QDGDVMHFRF (84 aa).

It belongs to the TRAFAC class OBG-HflX-like GTPase superfamily. OBG GTPase family. YchF/OLA1 subfamily. It depends on Mg(2+) as a cofactor.

ATPase that binds to both the 70S ribosome and the 50S ribosomal subunit in a nucleotide-independent manner. The protein is Ribosome-binding ATPase YchF of Pasteurella multocida (strain Pm70).